A 96-amino-acid chain; its full sequence is Prokineticin Bv8 (96 aa).

An N-terminal signal peptide occupies residues 1–19 (MKCFAQIVVLLLVIAFSHG). A may be important for binding to prokineticin receptor 2 region spans residues 20–24 (AVITG). 5 disulfides stabilise this stretch: Cys-26–Cys-38, Cys-32–Cys-50, Cys-37–Cys-78, Cys-60–Cys-86, and Cys-80–Cys-95.

As to expression, expressed by the skin glands.

It localises to the secreted. Its function is as follows. Potent agonist for both PKR1/PROKR1 and PKR2/PROKR2, and inducer of a potent and long-lasting hyperalgesia. Shows an EC(50) of 0.264 nM, when tested on neuroblastoma cells (SH-SY5Y) which endogenously express mainly PKR2/PROKR2. Also potentiates capsaicin-induced TRPV1 current, when tested on DRG neurons. Induces a biphasic hyperalgesia to tactile and thermal stimuli after systemic injection of this protein into rat. The initial phase of hyperalgesia is caused by a local action on nociceptors, because intraplantar injection of this protein causes a strong and localized hyperalgesia with a similar time course to that of the initial phase of hyperalgesia seen with systemic injection. The secondary phase of hyperalgesia is not seen with local intraplantar injection and is therefore probably attributable to a central action of this protein. At subnanomolar concentrations, this protein both induces potent chemotaxis of macrophages and stimulates LPS-induced production of the pro-inflammatory cytokines IL-1 and IL-12. In vivo, this protein potently stimulates the contraction of the guinea-pig gastrointestinal (GI) smooth muscle (at nanomolar concentration). The chain is Prokineticin Bv8 from Bombina variegata (Yellow-bellied toad).